Reading from the N-terminus, the 320-residue chain is Malate dehydrogenase (320 aa).

NAD(+) is bound by residues 10-15 (GAGQIG) and D34. R83 and R89 together coordinate substrate. NAD(+) is bound by residues N96 and 119–121 (ITN). 2 residues coordinate substrate: N121 and R152. The active-site Proton acceptor is the H176.

This sequence belongs to the LDH/MDH superfamily. MDH type 3 family.

It catalyses the reaction (S)-malate + NAD(+) = oxaloacetate + NADH + H(+). In terms of biological role, catalyzes the reversible oxidation of malate to oxaloacetate. The protein is Malate dehydrogenase of Methylobacterium nodulans (strain LMG 21967 / CNCM I-2342 / ORS 2060).